Reading from the N-terminus, the 243-residue chain is ATP synthase subunit a (243 aa).

The next 8 membrane-spanning stretches (helical) occupy residues 29–49 (NASL…YVGL), 54–74 (VIPN…VSTI), 89–109 (VFTI…PLGF), 114–134 (HIAV…FIGF), 141–161 (FLHI…MVLI), 177–197 (LAAN…FVIN), 200–220 (IFLT…EIFV), and 221–241 (AILQ…DAVN).

Belongs to the ATPase A chain family. As to quaternary structure, F-type ATPases have 2 components, CF(1) - the catalytic core - and CF(0) - the membrane proton channel. CF(1) has five subunits: alpha(3), beta(3), gamma(1), delta(1), epsilon(1). CF(0) has three main subunits: a(1), b(2) and c(9-12). The alpha and beta chains form an alternating ring which encloses part of the gamma chain. CF(1) is attached to CF(0) by a central stalk formed by the gamma and epsilon chains, while a peripheral stalk is formed by the delta and b chains.

It is found in the cell inner membrane. Key component of the proton channel; it plays a direct role in the translocation of protons across the membrane. This chain is ATP synthase subunit a, found in Ehrlichia ruminantium (strain Welgevonden).